The chain runs to 138 residues: F-box protein At4g12382 (138 aa).

The region spanning 7–53 (NPSFADLPSSLIEVIMSHLALKNNIRASAACKSWYEVGVSVRVVEKH) is the F-box domain.

The chain is F-box protein At4g12382 from Arabidopsis thaliana (Mouse-ear cress).